Reading from the N-terminus, the 256-residue chain is MSELLIRQFPCLSDNYGFLIHDPDSGETATIDTPDADVILNEADQAGWSITQIWNTHHHFDHAGGNETIQALTGAKVVAPRYDRHRIPGISMEVEDGDVISLGDHKAKVFYTPGHTMGHVCYHMPMDGIAFVGDTLFALGCGRLFEGTPAEMWHSLSRLAALPDETRIYCAHEYTEANARFALSIDPDNHDLQVYAAMVEGERARGEPTVPTTIAAEKAANPFLRPDDPAIRARLGMEHDDDEEVFAEIRRRKDSF.

7 residues coordinate Zn(2+): His-57, His-59, Asp-61, His-62, His-115, Asp-134, and His-172.

It belongs to the metallo-beta-lactamase superfamily. Glyoxalase II family. In terms of assembly, monomer. The cofactor is Zn(2+).

It carries out the reaction an S-(2-hydroxyacyl)glutathione + H2O = a 2-hydroxy carboxylate + glutathione + H(+). Its pathway is secondary metabolite metabolism; methylglyoxal degradation; (R)-lactate from methylglyoxal: step 2/2. Its function is as follows. Thiolesterase that catalyzes the hydrolysis of S-D-lactoyl-glutathione to form glutathione and D-lactic acid. In Maricaulis maris (strain MCS10) (Caulobacter maris), this protein is Hydroxyacylglutathione hydrolase.